The following is a 523-amino-acid chain: Histidine ammonia-lyase (523 aa).

The 5-imidazolinone (Ala-Gly) cross-link spans 148-150; the sequence is ASG. 2,3-didehydroalanine (Ser) is present on serine 149.

It belongs to the PAL/histidase family. Post-translationally, contains an active site 4-methylidene-imidazol-5-one (MIO), which is formed autocatalytically by cyclization and dehydration of residues Ala-Ser-Gly.

The protein localises to the cytoplasm. It catalyses the reaction L-histidine = trans-urocanate + NH4(+). Its pathway is amino-acid degradation; L-histidine degradation into L-glutamate; N-formimidoyl-L-glutamate from L-histidine: step 1/3. The protein is Histidine ammonia-lyase of Chloroflexus aurantiacus (strain ATCC 29366 / DSM 635 / J-10-fl).